Consider the following 283-residue polypeptide: Spore coat polysaccharide biosynthesis protein SpsK (283 aa).

This sequence belongs to the dTDP-4-dehydrorhamnose reductase family.

The protein operates within spore coat biogenesis; spore coat polysaccharide biosynthesis. This chain is Spore coat polysaccharide biosynthesis protein SpsK (spsK), found in Bacillus subtilis (strain 168).